We begin with the raw amino-acid sequence, 158 residues long: Transcription elongation factor GreA (158 aa).

Residues 46-66 adopt a coiled-coil conformation; the sequence is AEYEAAKERQGFIEGRISELE.

It belongs to the GreA/GreB family.

Its function is as follows. Necessary for efficient RNA polymerase transcription elongation past template-encoded arresting sites. The arresting sites in DNA have the property of trapping a certain fraction of elongating RNA polymerases that pass through, resulting in locked ternary complexes. Cleavage of the nascent transcript by cleavage factors such as GreA or GreB allows the resumption of elongation from the new 3'terminus. GreA releases sequences of 2 to 3 nucleotides. The protein is Transcription elongation factor GreA of Neisseria meningitidis serogroup A / serotype 4A (strain DSM 15465 / Z2491).